Here is a 304-residue protein sequence, read N- to C-terminus: Putative metal ion transporter ZIPCO (304 aa).

A run of 8 helical transmembrane segments spans residues 1 to 21 (MWLK…VIYL), 46 to 66 (VASG…VIGL), 74 to 94 (IYCC…TDIL), 158 to 178 (FFIV…IGSL), 183 to 203 (PIII…LMIY), 218 to 238 (IYAW…VLSF), 243 to 263 (FVEI…SFNM), and 275 to 295 (FYIS…MIVF).

Its subcellular location is the cell membrane. Putative transporter for the divalent zinc and iron cations. Required for the development of liver-stage parasites. The sequence is that of Putative metal ion transporter ZIPCO from Plasmodium berghei (strain Anka).